A 194-amino-acid polypeptide reads, in one-letter code: MYLEQIKGELQEAADVLAKFMADEKNIQLIQEAALLIANSFKQGGKVLSCGNGGSHCDAMHFAEELTGRYRENRPAYPAIAISDVSHLSCVSNDFGYEYVFSRYIEAVGQTGDVLFGLSTSGNSKNVLNAINIAKEKGMKVIALTGKDGGQMAGLADVEIRVPHFRYADRTQEIHIKVIHILMMLIEFEMAKTA.

The SIS domain maps to 37-194 (IANSFKQGGK…LIEFEMAKTA (158 aa)). 52 to 54 (NGG) lines the substrate pocket. Positions 61 and 65 each coordinate Zn(2+). Residues E65, 93 to 94 (ND), 119 to 121 (STS), S124, and Q172 contribute to the substrate site. Zn(2+) is bound by residues Q172 and H180.

The protein belongs to the SIS family. GmhA subfamily. Homotetramer. Requires Zn(2+) as cofactor.

It localises to the cytoplasm. The enzyme catalyses 2 D-sedoheptulose 7-phosphate = D-glycero-alpha-D-manno-heptose 7-phosphate + D-glycero-beta-D-manno-heptose 7-phosphate. Its pathway is carbohydrate biosynthesis; D-glycero-D-manno-heptose 7-phosphate biosynthesis; D-glycero-alpha-D-manno-heptose 7-phosphate and D-glycero-beta-D-manno-heptose 7-phosphate from sedoheptulose 7-phosphate: step 1/1. The protein operates within bacterial outer membrane biogenesis; LOS core biosynthesis. In terms of biological role, catalyzes the isomerization of sedoheptulose 7-phosphate in D-glycero-D-manno-heptose 7-phosphate. This chain is Phosphoheptose isomerase, found in Haemophilus ducreyi (strain 35000HP / ATCC 700724).